We begin with the raw amino-acid sequence, 225 residues long: Uracil phosphoribosyltransferase (225 aa).

Residue 36–40 (KGLVR) coordinates GTP. Residues Arg-86, Arg-111, and 145 to 153 (DPMLATGST) each bind 5-phospho-alpha-D-ribose 1-diphosphate. Uracil is bound by residues Ile-210 and 215–217 (GDA). Residue Asp-216 participates in 5-phospho-alpha-D-ribose 1-diphosphate binding.

The protein belongs to the UPRTase family. Requires Mg(2+) as cofactor.

The catalysed reaction is UMP + diphosphate = 5-phospho-alpha-D-ribose 1-diphosphate + uracil. Its pathway is pyrimidine metabolism; UMP biosynthesis via salvage pathway; UMP from uracil: step 1/1. Its activity is regulated as follows. Allosterically activated by GTP. Catalyzes the conversion of uracil and 5-phospho-alpha-D-ribose 1-diphosphate (PRPP) to UMP and diphosphate. The protein is Uracil phosphoribosyltransferase of Haloarcula marismortui (strain ATCC 43049 / DSM 3752 / JCM 8966 / VKM B-1809) (Halobacterium marismortui).